The chain runs to 323 residues: Syntaxin-42 (323 aa).

The Cytoplasmic portion of the chain corresponds to 1–302 (MATRNRTTVY…QREGAMVKCA (302 aa)). One can recognise a t-SNARE coiled-coil homology domain in the interval 227 to 289 (QHVSAERERE…EEGYKQLQKA (63 aa)). A helical; Anchor for type IV membrane protein transmembrane segment spans residues 303 to 323 (TILLVLCLIMIVLLILKNILF).

This sequence belongs to the syntaxin family. In terms of assembly, interacts with VTI12 and SYP61 to form a t-SNARE complex and with VPS45. In terms of tissue distribution, expressed at low levels in roots, stems, flowers and leaves.

It localises to the golgi apparatus. The protein resides in the trans-Golgi network membrane. Contributes to the regulation of secretory and vacuolar transport pathways in the post-Golgi network, and to the maintenance of the Golgi apparatus and trans-Golgi network (TGN) morphologies. Vesicle trafficking protein that functions in the secretory pathway and mediates liposome fusion. Required for extracellular resistance responses to a fungal pathogen. Also involved in the protection of chloroplasts from salicylic acid-dependent biotic stress. This chain is Syntaxin-42, found in Arabidopsis thaliana (Mouse-ear cress).